We begin with the raw amino-acid sequence, 344 residues long: MASILISGAAGVSIPLVGTLLPLNGGLMRGAKAFAAGVILATGFVHMLSGGSKALSDPCLPEFPWKMFPFPEFFAMVAALLTLLADFMITGYYERKQEKMMNQSVESLGTQVSVMSDPGLESGFLRDQEDGGALHIVGMRAHAEHHRHSLSMGAEGFEALSKRSGVSGHGHGHSHGHGDVGLDSGVRHVVVSQILEMGIVSHSIIIGISLGVSHSPCTIRPLLLALSFHQFFEGFALGGCVAEARLTPRGSAMMAFFFAITTPIGVAVGTAIASSYNSYSVAALVAEGVLDSLSAGILVYMALVDLIAADFLSKKMSVDFRVQVVSYCFLFLGAGMMSALAIWA.

The helical transmembrane segment at 1 to 21 (MASILISGAAGVSIPLVGTLL) threads the bilayer. Topologically, residues 22 to 30 (PLNGGLMRG) are cytoplasmic. Residues 31-51 (AKAFAAGVILATGFVHMLSGG) form a helical membrane-spanning segment. At 52–72 (SKALSDPCLPEFPWKMFPFPE) the chain is on the extracellular side. Residues 73–93 (FFAMVAALLTLLADFMITGYY) traverse the membrane as a helical segment. Over 94 to 188 (ERKQEKMMNQ…DVGLDSGVRH (95 aa)) the chain is Cytoplasmic. Residues 189-209 (VVVSQILEMGIVSHSIIIGIS) traverse the membrane as a helical segment. The Extracellular portion of the chain corresponds to 210-221 (LGVSHSPCTIRP). Residues 222–242 (LLLALSFHQFFEGFALGGCVA) form a helical membrane-spanning segment. At 243 to 251 (EARLTPRGS) the chain is on the cytoplasmic side. The chain crosses the membrane as a helical span at residues 252 to 272 (AMMAFFFAITTPIGVAVGTAI). Residues 273–291 (ASSYNSYSVAALVAEGVLD) are Extracellular-facing. A helical transmembrane segment spans residues 292–312 (SLSAGILVYMALVDLIAADFL). At 313–323 (SKKMSVDFRVQ) the chain is on the cytoplasmic side. A helical transmembrane segment spans residues 324-344 (VVSYCFLFLGAGMMSALAIWA).

It belongs to the ZIP transporter (TC 2.A.5) family.

Its subcellular location is the cell membrane. Zinc transporter involved in zinc uptake in roots. Targeted by BZIP19 transcription factor in response to zinc-deficient conditions. The protein is Zinc transporter 9 (ZIP9) of Arabidopsis thaliana (Mouse-ear cress).